A 145-amino-acid polypeptide reads, in one-letter code: Small ribosomal subunit protein eS19 (145 aa).

It belongs to the eukaryotic ribosomal protein eS19 family. In terms of assembly, component of the small ribosomal subunit.

The protein localises to the cytoplasm. The protein resides in the nucleus. In terms of biological role, component of the small ribosomal subunit. The ribosome is a large ribonucleoprotein complex responsible for the synthesis of proteins in the cell. Required for pre-rRNA processing and maturation of 40S ribosomal subunits. The protein is Small ribosomal subunit protein eS19 (rps19) of Myxine glutinosa (Atlantic hagfish).